A 427-amino-acid chain; its full sequence is Adenylosuccinate synthetase (427 aa).

GTP contacts are provided by residues 12–18 (GDEGKGK) and 40–42 (GHT). The active-site Proton acceptor is the D13. Mg(2+) contacts are provided by D13 and G40. IMP is bound by residues 13–16 (DEGK), 38–41 (NAGH), T128, R142, Q223, T238, and R302. H41 (proton donor) is an active-site residue. Position 298-304 (298-304 (TTTGRPR)) interacts with substrate. GTP contacts are provided by residues R304, 330-332 (KLD), and 412-414 (SVG).

The protein belongs to the adenylosuccinate synthetase family. In terms of assembly, homodimer. It depends on Mg(2+) as a cofactor.

It localises to the cytoplasm. It carries out the reaction IMP + L-aspartate + GTP = N(6)-(1,2-dicarboxyethyl)-AMP + GDP + phosphate + 2 H(+). The protein operates within purine metabolism; AMP biosynthesis via de novo pathway; AMP from IMP: step 1/2. In terms of biological role, plays an important role in the de novo pathway of purine nucleotide biosynthesis. Catalyzes the first committed step in the biosynthesis of AMP from IMP. The sequence is that of Adenylosuccinate synthetase from Carboxydothermus hydrogenoformans (strain ATCC BAA-161 / DSM 6008 / Z-2901).